The chain runs to 217 residues: Protein-L-isoaspartate O-methyltransferase (217 aa).

The active site involves Ser61.

This sequence belongs to the methyltransferase superfamily. L-isoaspartyl/D-aspartyl protein methyltransferase family.

It is found in the cytoplasm. The enzyme catalyses [protein]-L-isoaspartate + S-adenosyl-L-methionine = [protein]-L-isoaspartate alpha-methyl ester + S-adenosyl-L-homocysteine. Functionally, catalyzes the methyl esterification of L-isoaspartyl residues in peptides and proteins that result from spontaneous decomposition of normal L-aspartyl and L-asparaginyl residues. It plays a role in the repair and/or degradation of damaged proteins. This chain is Protein-L-isoaspartate O-methyltransferase, found in Syntrophotalea carbinolica (strain DSM 2380 / NBRC 103641 / GraBd1) (Pelobacter carbinolicus).